The following is a 1209-amino-acid chain: Major DNA-binding protein (1209 aa).

Residues 290–312 are disordered; the sequence is NAGKGSGRAQRQGDGSGSKNSAS. A zinc finger lies at 503–516; sequence CGLCNQATRPACAH. The Required for filament formation motif lies at 849-850; that stretch reads FW. The tract at residues 1182–1209 is required for nuclear localization; that stretch reads QKRSLPDDILFDMGAPPEKKSGLTFDML.

This sequence belongs to the herpesviridae major DNA-binding protein family. In terms of assembly, homooligomers. Forms double-helical filaments necessary for the formation of replication compartments within the host nucleus. Interacts with the origin-binding protein. Interacts with the helicase primase complex; this interaction stimulates primer synthesis activity of the helicase-primase complex. Interacts with the DNA polymerase. Interacts with the alkaline exonuclease; this interaction increases its nuclease processivity.

The protein resides in the host nucleus. In terms of biological role, plays several crucial roles in viral infection. Participates in the opening of the viral DNA origin to initiate replication by interacting with the origin-binding protein. May disrupt loops, hairpins and other secondary structures present on ssDNA to reduce and eliminate pausing of viral DNA polymerase at specific sites during elongation. Promotes viral DNA recombination by performing strand-transfer, characterized by the ability to transfer a DNA strand from a linear duplex to a complementary single-stranded DNA circle. Can also catalyze the renaturation of complementary single strands. Additionally, reorganizes the host cell nucleus, leading to the formation of prereplicative sites and replication compartments. This process is driven by the protein which can form double-helical filaments in the absence of DNA. This Equine herpesvirus 1 (strain Ab4p) (EHV-1) protein is Major DNA-binding protein.